Reading from the N-terminus, the 478-residue chain is Adenosylhomocysteinase (478 aa).

The substrate site is built by T56, D139, and E201. Position 202 to 204 (T202 to T204) interacts with NAD(+). The substrate site is built by K231 and D235. NAD(+) is bound by residues N236, G265–G270, E288, N323, I344–H346, and N392.

The protein belongs to the adenosylhomocysteinase family. Requires NAD(+) as cofactor.

It is found in the cytoplasm. The enzyme catalyses S-adenosyl-L-homocysteine + H2O = L-homocysteine + adenosine. The protein operates within amino-acid biosynthesis; L-homocysteine biosynthesis; L-homocysteine from S-adenosyl-L-homocysteine: step 1/1. In terms of biological role, may play a key role in the regulation of the intracellular concentration of adenosylhomocysteine. The sequence is that of Adenosylhomocysteinase from Corynebacterium diphtheriae (strain ATCC 700971 / NCTC 13129 / Biotype gravis).